A 162-amino-acid chain; its full sequence is Large ribosomal subunit protein bL17 (162 aa).

The interval 118–162 (RAPAAAPEAEEKGEKKAAGKAEKAPKAAKAPKAEKKPAKKAAKAE) is disordered. The segment covering 126 to 162 (AEEKGEKKAAGKAEKAPKAAKAPKAEKKPAKKAAKAE) has biased composition (basic and acidic residues).

This sequence belongs to the bacterial ribosomal protein bL17 family. Part of the 50S ribosomal subunit. Contacts protein L32.

The protein is Large ribosomal subunit protein bL17 of Anaeromyxobacter dehalogenans (strain 2CP-C).